A 68-amino-acid chain; its full sequence is Large ribosomal subunit protein bL31 (68 aa).

Zn(2+)-binding residues include C16, C18, C36, and C39.

The protein belongs to the bacterial ribosomal protein bL31 family. Type A subfamily. Part of the 50S ribosomal subunit. The cofactor is Zn(2+).

In terms of biological role, binds the 23S rRNA. The chain is Large ribosomal subunit protein bL31 from Lachnospira eligens (strain ATCC 27750 / DSM 3376 / VPI C15-48 / C15-B4) (Eubacterium eligens).